The sequence spans 269 residues: Aminoglycoside N(3)-acetyltransferase III (269 aa).

The protein belongs to the antibiotic N-acetyltransferase family.

The catalysed reaction is a 2-deoxystreptamine antibiotic + acetyl-CoA = an N(3)-acetyl-2-deoxystreptamine antibiotic + CoA + H(+). In terms of biological role, resistance to antibiotics containing the 2-deoxy-streptamine ring including gentamicin, kanamycin, tobramycin, neomycin and apramycin. The sequence is that of Aminoglycoside N(3)-acetyltransferase III (aac3-Vb) from Serratia marcescens.